Reading from the N-terminus, the 141-residue chain is MKSFIVVLCCLFAITYGQTDLPAIRRNARFQRNLALVALHNQIFGAEGVENGLAKTQEEKVCILNVKEAALEEGNIVLDETVGKIIPEVERLSTSGTEAEIKAFLDKTDYPAYKKSAMNEFKQKIMTWIPAVQGKMAACRK.

A signal peptide spans 1–17; that stretch reads MKSFIVVLCCLFAITYG. A disulfide bridge links cysteine 62 with cysteine 139.

Belongs to the insect vpf1 family. Expressed by the venom gland (posterior main gland) (at protein level).

It is found in the secreted. The polypeptide is Venom protein family 1 protein 1 (Platymeris rhadamanthus (Red spot assassin bug)).